The primary structure comprises 412 residues: Subtilisin-like protease 6 (412 aa).

Residues 1-20 (MGFITKAIPIVLAALSTVNG) form the signal peptide. Positions 21–126 (ARILEAGPHA…VVRTTTNGTN (106 aa)) are excised as a propeptide. The Inhibitor I9 domain maps to 36 to 120 (KYIVVMKREV…FIEPDFVVRT (85 aa)). N-linked (GlcNAc...) asparagine glycosylation is found at Asn-123 and Asn-126. The 278-residue stretch at 135 to 412 (SWGLARVGSK…GKLIYNGSGK (278 aa)) folds into the Peptidase S8 domain. Active-site charge relay system residues include Asp-167 and His-198. 2 N-linked (GlcNAc...) asparagine glycosylation sites follow: Asn-252 and Asn-264. The active-site Charge relay system is Ser-358. Asn-408 carries N-linked (GlcNAc...) asparagine glycosylation.

The protein belongs to the peptidase S8 family.

Its subcellular location is the secreted. In terms of biological role, secreted subtilisin-like serine protease with keratinolytic activity that contributes to pathogenicity. This Trichophyton rubrum (Athlete's foot fungus) protein is Subtilisin-like protease 6 (SUB6).